We begin with the raw amino-acid sequence, 100 residues long: NADH-quinone oxidoreductase subunit K (100 aa).

The next 3 helical transmembrane spans lie at 2-22, 29-49, and 63-83; these read IGLSHYLIVSALIFSIGLMGV, LMLFFATEVMLNAVNIAFAAI, and FFIIAIAASEVAVGLGILIVL.

This sequence belongs to the complex I subunit 4L family. NDH-1 is composed of 14 different subunits. Subunits NuoA, H, J, K, L, M, N constitute the membrane sector of the complex.

The protein localises to the cell inner membrane. The enzyme catalyses a quinone + NADH + 5 H(+)(in) = a quinol + NAD(+) + 4 H(+)(out). Its function is as follows. NDH-1 shuttles electrons from NADH, via FMN and iron-sulfur (Fe-S) centers, to quinones in the respiratory chain. The immediate electron acceptor for the enzyme in this species is believed to be ubiquinone. Couples the redox reaction to proton translocation (for every two electrons transferred, four hydrogen ions are translocated across the cytoplasmic membrane), and thus conserves the redox energy in a proton gradient. In Sulfurovum sp. (strain NBC37-1), this protein is NADH-quinone oxidoreductase subunit K.